The primary structure comprises 190 residues: MTYEIQASVREAQGTGASRRLRREGQIPGILYGEGQEPVAIAVDHKTVFYALEKESFHTALIKLSLNGETKDVIVRDFQMHPFRREVQHIDFQAVKADQLVRIRVPLHIVNAENSQAVKLQGGRVSLLNTSVEVVALPANIPAFLDLDCAEVVAGDILHLSDIKLPEGVESVSLKRNENLAVATVTGKKR.

Belongs to the bacterial ribosomal protein bL25 family. CTC subfamily. As to quaternary structure, part of the 50S ribosomal subunit; part of the 5S rRNA/L5/L18/L25 subcomplex. Contacts the 5S rRNA. Binds to the 5S rRNA independently of L5 and L18.

In terms of biological role, this is one of the proteins that binds to the 5S RNA in the ribosome where it forms part of the central protuberance. The chain is Large ribosomal subunit protein bL25 from Neisseria meningitidis serogroup C (strain 053442).